The sequence spans 181 residues: UPF0302 protein lin2035 (181 aa).

Belongs to the UPF0302 family.

This Listeria innocua serovar 6a (strain ATCC BAA-680 / CLIP 11262) protein is UPF0302 protein lin2035.